The chain runs to 92 residues: Evasin P942 (92 aa).

The first 26 residues, 1-26 (MEVKTFAFLQIAVLIALGLHLAPAGS), serve as a signal peptide directing secretion. Disulfide bonds link Cys-44–Cys-63, Cys-48–Cys-65, and Cys-59–Cys-76. Residue Asn-47 is glycosylated (N-linked (GlcNAc...) asparagine). The N-linked (GlcNAc...) asparagine glycan is linked to Asn-70.

It localises to the secreted. Functionally, salivary chemokine-binding protein which binds to host chemokines CXCL1, CXCL2, CXCL3, CXCL4, CXCL5, CXCL6, CXCL10, CXCL11 and CXCL13. The chain is Evasin P942 from Ixodes ricinus (Common tick).